The sequence spans 217 residues: Gas vesicle protein F2 (217 aa).

The protein belongs to the gas vesicle GvpF/GvpL family. Binds GvpA.

It is found in the gas vesicle. It localises to the cytoplasm. A minor component of the gas vesicle, may be involved in preventing GvpA aggregation during gas vesicle nucleation. Gas vesicles are hollow, gas filled proteinaceous nanostructures found in several microbial planktonic microorganisms. They allow positioning of halobacteria at the optimal depth for growth in the poorly aerated, shallow brine pools of their habitat. Functionally, expression of 2 c-vac DNA fragments containing 2 divergently transcribed regions (gvpE-gvpF-gvpG-gvpH-gvpI-gvpJ-gvpK-gvpL-gvpM and gvpA-gvpC-gvpN-gvpO) allows H.volcanii to produce gas vesicles. Note that gvpD is not necessary for gas vesicle formation. The chain is Gas vesicle protein F2 from Halobacterium salinarum (strain ATCC 700922 / JCM 11081 / NRC-1) (Halobacterium halobium).